A 421-amino-acid chain; its full sequence is Histidine--tRNA ligase (421 aa).

This sequence belongs to the class-II aminoacyl-tRNA synthetase family. Homodimer.

The protein resides in the cytoplasm. The enzyme catalyses tRNA(His) + L-histidine + ATP = L-histidyl-tRNA(His) + AMP + diphosphate + H(+). This is Histidine--tRNA ligase from Natranaerobius thermophilus (strain ATCC BAA-1301 / DSM 18059 / JW/NM-WN-LF).